The primary structure comprises 479 residues: RHO1 GEF localizing protein 1 (479 aa).

Residues 460–479 (SQKDPSRTDPSKLRRVPVIQ) form a disordered region.

In terms of biological role, regulator of RHO1 signaling that acts as a cofactor required for the efficient localization of the TUS1 GTP exchange factor (GEF) for RHO1 to the bud neck during all phases of cytokinesis. RHO1 is a key, essential hub protein in the cell wall integrity (CWI) pathway in which activated RHO1-GTP binds directly to and activates multiple different downstream effectors required for cell wall synthesis and actin assembly during cytokinesis. This chain is RHO1 GEF localizing protein 1, found in Saccharomyces cerevisiae (strain ATCC 204508 / S288c) (Baker's yeast).